Reading from the N-terminus, the 250-residue chain is Ubiquinone/menaquinone biosynthesis C-methyltransferase UbiE (250 aa).

S-adenosyl-L-methionine contacts are provided by residues threonine 73, aspartate 94, 122 to 123, and serine 139; that span reads NA.

It belongs to the class I-like SAM-binding methyltransferase superfamily. MenG/UbiE family.

The catalysed reaction is a 2-demethylmenaquinol + S-adenosyl-L-methionine = a menaquinol + S-adenosyl-L-homocysteine + H(+). It catalyses the reaction a 2-methoxy-6-(all-trans-polyprenyl)benzene-1,4-diol + S-adenosyl-L-methionine = a 5-methoxy-2-methyl-3-(all-trans-polyprenyl)benzene-1,4-diol + S-adenosyl-L-homocysteine + H(+). The protein operates within quinol/quinone metabolism; menaquinone biosynthesis; menaquinol from 1,4-dihydroxy-2-naphthoate: step 2/2. It participates in cofactor biosynthesis; ubiquinone biosynthesis. Methyltransferase required for the conversion of demethylmenaquinol (DMKH2) to menaquinol (MKH2) and the conversion of 2-polyprenyl-6-methoxy-1,4-benzoquinol (DDMQH2) to 2-polyprenyl-3-methyl-6-methoxy-1,4-benzoquinol (DMQH2). This Francisella tularensis subsp. tularensis (strain WY96-3418) protein is Ubiquinone/menaquinone biosynthesis C-methyltransferase UbiE.